Reading from the N-terminus, the 517-residue chain is Dopamine receptor 4 (517 aa).

The Extracellular portion of the chain corresponds to 1 to 46 (MLAYGSDPNAEDLYITMTPSVSTENDTTVWATEEPAAIVWRHPLLA). N25 carries N-linked (GlcNAc...) asparagine glycosylation. A helical transmembrane segment spans residues 47–67 (IALFSICLLTVAGNCLVVIAV). The Cytoplasmic segment spans residues 68-77 (CTKKYLRNPT). Residues 78-98 (GYLIISLAIADLIVGVIVMPM) traverse the membrane as a helical segment. The Extracellular segment spans residues 99–108 (NSLFEIANHT). Residue N106 is glycosylated (N-linked (GlcNAc...) asparagine). The chain crosses the membrane as a helical span at residues 109–129 (WLFGLMMCDVFHAMDILASTA). Over 130-159 (SIWNLCVISLDRYMAGQDPIGYRDKVSKRR) the chain is Cytoplasmic. The chain crosses the membrane as a helical span at residues 160–180 (ILMAILSVWVLSAILSFPGII). Topologically, residues 181–209 (WWRTSSPHLYEDQSQCLFTDSKMYVSFSS) are extracellular. A helical membrane pass occupies residues 210–230 (LVSFYIPLFLILFAYGKVYII). Residues 231–409 (ATRHSKGMRM…YVHEQRAART (179 aa)) are Cytoplasmic-facing. The segment at 309-339 (NDRGEHNNNNTVRQPLLRGTEGCHSDSISRS) is disordered. Residues 410–430 (LSIVVGAFILCWTPFFVFTPL) traverse the membrane as a helical segment. The Extracellular portion of the chain corresponds to 431–442 (TAFCESCFSNKE). Residues 443 to 463 (TIFTFVTWAGHLNSMLNPLIY) traverse the membrane as a helical segment. The Cytoplasmic portion of the chain corresponds to 464–517 (SRFSRDFRRAFKQILTCQRQQKVKTAFKTPLSLVFTQLISVTQMWEQPPNTSIE).

The protein belongs to the G-protein coupled receptor 1 family. As to expression, expressed in pharyngeal neurons I1 and I2, neurons ASG, AVL, CAN, PQR, vulva, intestine, rectal glands and rectal epithelial glands. Also expressed in neurons in ray 8 in males.

It localises to the cell membrane. Its function is as follows. Receptor for dopamine. The activity of this receptor is mediated by G proteins which activate adenylyl cyclase. In terms of antagonist responses, would be classed with the D1-like dopamine receptor group. The sequence is that of Dopamine receptor 4 (dop-4) from Caenorhabditis elegans.